Reading from the N-terminus, the 248-residue chain is Aspartate/glutamate leucyltransferase (248 aa).

This sequence belongs to the R-transferase family. Bpt subfamily.

The protein localises to the cytoplasm. It catalyses the reaction N-terminal L-glutamyl-[protein] + L-leucyl-tRNA(Leu) = N-terminal L-leucyl-L-glutamyl-[protein] + tRNA(Leu) + H(+). The catalysed reaction is N-terminal L-aspartyl-[protein] + L-leucyl-tRNA(Leu) = N-terminal L-leucyl-L-aspartyl-[protein] + tRNA(Leu) + H(+). In terms of biological role, functions in the N-end rule pathway of protein degradation where it conjugates Leu from its aminoacyl-tRNA to the N-termini of proteins containing an N-terminal aspartate or glutamate. The sequence is that of Aspartate/glutamate leucyltransferase from Methylorubrum extorquens (strain PA1) (Methylobacterium extorquens).